A 453-amino-acid chain; its full sequence is Bifunctional protein GlmU (453 aa).

Residues 1 to 226 (MFAIAILAAG…IDEVSGVNDR (226 aa)) are pyrophosphorylase. Residues 7–10 (LAAG), K21, Q73, and 78–79 (GT) contribute to the UDP-N-acetyl-alpha-D-glucosamine site. D103 is a Mg(2+) binding site. 4 residues coordinate UDP-N-acetyl-alpha-D-glucosamine: G140, E155, N170, and N224. N224 is a Mg(2+) binding site. The linker stretch occupies residues 227-247 (AQLANCENLIQQSLRNHWMSK). An N-acetyltransferase region spans residues 248–453 (GVSFIDPESC…NWKTREETNQ (206 aa)). Residues R329 and K347 each contribute to the UDP-N-acetyl-alpha-D-glucosamine site. The active-site Proton acceptor is the H359. Positions 362 and 373 each coordinate UDP-N-acetyl-alpha-D-glucosamine. Residues A376, A419, and R436 each coordinate acetyl-CoA.

It in the N-terminal section; belongs to the N-acetylglucosamine-1-phosphate uridyltransferase family. In the C-terminal section; belongs to the transferase hexapeptide repeat family. As to quaternary structure, homotrimer. Requires Mg(2+) as cofactor.

It localises to the cytoplasm. The catalysed reaction is alpha-D-glucosamine 1-phosphate + acetyl-CoA = N-acetyl-alpha-D-glucosamine 1-phosphate + CoA + H(+). It catalyses the reaction N-acetyl-alpha-D-glucosamine 1-phosphate + UTP + H(+) = UDP-N-acetyl-alpha-D-glucosamine + diphosphate. Its pathway is nucleotide-sugar biosynthesis; UDP-N-acetyl-alpha-D-glucosamine biosynthesis; N-acetyl-alpha-D-glucosamine 1-phosphate from alpha-D-glucosamine 6-phosphate (route II): step 2/2. The protein operates within nucleotide-sugar biosynthesis; UDP-N-acetyl-alpha-D-glucosamine biosynthesis; UDP-N-acetyl-alpha-D-glucosamine from N-acetyl-alpha-D-glucosamine 1-phosphate: step 1/1. It functions in the pathway bacterial outer membrane biogenesis; LPS lipid A biosynthesis. Catalyzes the last two sequential reactions in the de novo biosynthetic pathway for UDP-N-acetylglucosamine (UDP-GlcNAc). The C-terminal domain catalyzes the transfer of acetyl group from acetyl coenzyme A to glucosamine-1-phosphate (GlcN-1-P) to produce N-acetylglucosamine-1-phosphate (GlcNAc-1-P), which is converted into UDP-GlcNAc by the transfer of uridine 5-monophosphate (from uridine 5-triphosphate), a reaction catalyzed by the N-terminal domain. This Prochlorococcus marinus (strain MIT 9211) protein is Bifunctional protein GlmU.